The primary structure comprises 101 residues: Apolipoprotein C-II (101 aa).

An N-terminal signal peptide occupies residues 1-22 (MGTRYFLVGFLILLVLGFEAQG). Positions 66-74 (TVDEKIRDI) are lipid binding. Residues 78–101 (STAAVTTYAGIITDQVFSILSGED) form a lipoprotein lipase cofactor region.

This sequence belongs to the apolipoprotein C2 family. In terms of processing, proapolipoprotein C-II is synthesized as a sialic acid containing glycoprotein which is subsequently desialylated prior to its proteolytic processing. Post-translationally, proapolipoprotein C-II, the major form found in plasma undergoes proteolytic cleavage of its N-terminal hexapeptide to generate apolipoprotein C-II, which occurs as the minor form in plasma.

The protein resides in the secreted. Its function is as follows. Component of chylomicrons, very low-density lipoproteins (VLDL), low-density lipoproteins (LDL), and high-density lipoproteins (HDL) in plasma. Plays an important role in lipoprotein metabolism as an activator of lipoprotein lipase. Both proapolipoprotein C-II and apolipoprotein C-II can activate lipoprotein lipase. This chain is Apolipoprotein C-II (APOC2), found in Capra hircus aegagrus (Wild goat).